A 739-amino-acid polypeptide reads, in one-letter code: Nucleoprotein (739 aa).

Positions 334-363 (VNVGEQYQQLREAATEAEKQLQQYAESREL) form a coiled coil. Residues 415–646 (PKTSGHYDDD…QDSDNTQPEH (232 aa)) form a disordered region. Composition is skewed to low complexity over residues 449 to 458 (SQDTTIPDVV) and 504 to 514 (KGGQQKNSQKG). Residues 520–530 (RQTQSRPTQNI) show a composition bias toward polar residues. The segment covering 567-579 (EEADPLDDADDET) has biased composition (acidic residues). A compositionally biased stretch (basic and acidic residues) spans 611–638 (YRDHSEKKELPQDERQDQDHTQEARNQD).

Belongs to the filoviruses nucleoprotein family. In terms of assembly, homooligomer. Homomultimerizes to form the nucleocapsid. Binds to viral genomic RNA. Interacts with VP35 and VP30 to form the nucleocapsid. Interacts with host PPP2R5C; this interaction leads to VP30 dephosphorylation and viral transcription. Interacts with VP24; this interaction facilitates nucleocapsid assembly and genome packaging. Interacts with matrix protein VP40; this interaction allows recruitment of the nucleocapsid into progeny virions. Interacts with host STAU1. Interacts with host NXF1 (via RNA-binding domain); this interaction recruits NXF1 to the inclusion bodies were viral replication takes place, probably to export viral mRNA-NXF1 complexes from these sites. Interacts with host CCDC92; this interaction sequesters NP in the host cytoplasm. Interacts with host TRIM14. Phosphorylated and O-glycosylated by host. Acetylated by host EP300 in vitro.

It is found in the virion. The protein localises to the host cytoplasm. Oligomerizes into helical capsid to encapsidate the viral genome, protecting it from nucleases and the cellular innate immune response. VP35 binds to and stabilizes monomeric NP, keeping it soluble. Upon virus replication, NP is recruited to bind cooperatively viral genomic RNA and VP35 is released. The encapsidated genomic RNA is termed the nucleocapsid and serves as template for transcription and replication. The nucleocapsid is helical with a pitch of 10.81 NP per turn and a diameter of about 22nm. Each NP binds to six nucleotides of viral genomic RNA, three being exposed to the solvant and three hidden into the nucleocapsid. Also recruits host PPP2R5C phosphatase to dephosphorylate VP30 and thereby promote viral transcription. Upon virion assembly and budding, NP binds to VP24 and possibly host STAU1. In Zaire ebolavirus (strain Gabon-94) (ZEBOV), this protein is Nucleoprotein (NP).